The primary structure comprises 263 residues: Endonuclease 8 (263 aa).

P2 serves as the catalytic Schiff-base intermediate with DNA. The Proton donor role is filled by E3. The active-site Proton donor; for beta-elimination activity is K53. Residues Q70, R125, and N169 each contribute to the DNA site. An FPG-type zinc finger spans residues 229 to 263; sequence KVFHRDGERCERCGGVIEKTTLSSRPFYWCPGCQH. R253 acts as the Proton donor; for delta-elimination activity in catalysis.

This sequence belongs to the FPG family. The cofactor is Zn(2+).

The catalysed reaction is 2'-deoxyribonucleotide-(2'-deoxyribose 5'-phosphate)-2'-deoxyribonucleotide-DNA = a 3'-end 2'-deoxyribonucleotide-(2,3-dehydro-2,3-deoxyribose 5'-phosphate)-DNA + a 5'-end 5'-phospho-2'-deoxyribonucleoside-DNA + H(+). Its function is as follows. Involved in base excision repair of DNA damaged by oxidation or by mutagenic agents. Acts as a DNA glycosylase that recognizes and removes damaged bases. Has a preference for oxidized pyrimidines, such as thymine glycol, 5,6-dihydrouracil and 5,6-dihydrothymine. Has AP (apurinic/apyrimidinic) lyase activity and introduces nicks in the DNA strand. Cleaves the DNA backbone by beta-delta elimination to generate a single-strand break at the site of the removed base with both 3'- and 5'-phosphates. The chain is Endonuclease 8 from Klebsiella pneumoniae (strain 342).